A 453-amino-acid polypeptide reads, in one-letter code: Ribulose bisphosphate carboxylase large chain (453 aa).

Positions 1–2 (MS) are excised as a propeptide. An N-acetylproline modification is found at proline 3. Lysine 14 carries the N6,N6,N6-trimethyllysine modification. Substrate-binding residues include asparagine 123 and threonine 173. Lysine 175 serves as the catalytic Proton acceptor. Lysine 177 lines the substrate pocket. 3 residues coordinate Mg(2+): lysine 201, aspartate 203, and glutamate 204. Lysine 201 is modified (N6-carboxylysine). Histidine 294 acts as the Proton acceptor in catalysis. Residues arginine 295, histidine 327, and serine 379 each coordinate substrate.

The protein belongs to the RuBisCO large chain family. Type I subfamily. As to quaternary structure, heterohexadecamer of 8 large chains and 8 small chains; disulfide-linked. The disulfide link is formed within the large subunit homodimers. Mg(2+) is required as a cofactor. In terms of processing, the disulfide bond which can form in the large chain dimeric partners within the hexadecamer appears to be associated with oxidative stress and protein turnover.

The protein localises to the plastid. The protein resides in the chloroplast. It carries out the reaction 2 (2R)-3-phosphoglycerate + 2 H(+) = D-ribulose 1,5-bisphosphate + CO2 + H2O. It catalyses the reaction D-ribulose 1,5-bisphosphate + O2 = 2-phosphoglycolate + (2R)-3-phosphoglycerate + 2 H(+). RuBisCO catalyzes two reactions: the carboxylation of D-ribulose 1,5-bisphosphate, the primary event in carbon dioxide fixation, as well as the oxidative fragmentation of the pentose substrate in the photorespiration process. Both reactions occur simultaneously and in competition at the same active site. The polypeptide is Ribulose bisphosphate carboxylase large chain (Hydnophytum formicarum (Ant plant)).